Reading from the N-terminus, the 164-residue chain is 2S albumin seed storage protein PINP1 (164 aa).

Positions 1-29 (MGVFSSPMSTLRWVTLFAALLSLLEWGTA) are cleaved as a signal peptide. Residues 92 to 107 (DQSQSYDSSTDSDSQD) are compositionally biased toward low complexity. The segment at 92-137 (DQSQSYDSSTDSDSQDGAPLNQRRRRRGEGRGREEEEAVERAEELP) is disordered. Basic and acidic residues predominate over residues 120-137 (EGRGREEEEAVERAEELP). N-linked (GalNAc...) asparagine glycosylation is present at Asn-138.

The protein belongs to the 2S seed storage albumins family.

This Pinus pinea (Italian stone pine) protein is 2S albumin seed storage protein PINP1.